We begin with the raw amino-acid sequence, 265 residues long: Hydroxyethylthiazole kinase 2 (265 aa).

Residue M39 coordinates substrate. The ATP site is built by K115 and T168. G195 is a binding site for substrate.

It belongs to the Thz kinase family. The cofactor is Mg(2+).

The enzyme catalyses 5-(2-hydroxyethyl)-4-methylthiazole + ATP = 4-methyl-5-(2-phosphooxyethyl)-thiazole + ADP + H(+). It functions in the pathway cofactor biosynthesis; thiamine diphosphate biosynthesis; 4-methyl-5-(2-phosphoethyl)-thiazole from 5-(2-hydroxyethyl)-4-methylthiazole: step 1/1. Its function is as follows. Catalyzes the phosphorylation of the hydroxyl group of 4-methyl-5-beta-hydroxyethylthiazole (THZ). In Clostridium botulinum (strain Okra / Type B1), this protein is Hydroxyethylthiazole kinase 2.